A 243-amino-acid chain; its full sequence is Ubiquinone/menaquinone biosynthesis C-methyltransferase UbiE (243 aa).

S-adenosyl-L-methionine-binding positions include threonine 69, aspartate 90, and 116–117; that span reads DA.

Belongs to the class I-like SAM-binding methyltransferase superfamily. MenG/UbiE family.

It catalyses the reaction a 2-demethylmenaquinol + S-adenosyl-L-methionine = a menaquinol + S-adenosyl-L-homocysteine + H(+). The catalysed reaction is a 2-methoxy-6-(all-trans-polyprenyl)benzene-1,4-diol + S-adenosyl-L-methionine = a 5-methoxy-2-methyl-3-(all-trans-polyprenyl)benzene-1,4-diol + S-adenosyl-L-homocysteine + H(+). Its pathway is quinol/quinone metabolism; menaquinone biosynthesis; menaquinol from 1,4-dihydroxy-2-naphthoate: step 2/2. The protein operates within cofactor biosynthesis; ubiquinone biosynthesis. Methyltransferase required for the conversion of demethylmenaquinol (DMKH2) to menaquinol (MKH2) and the conversion of 2-polyprenyl-6-methoxy-1,4-benzoquinol (DDMQH2) to 2-polyprenyl-3-methyl-6-methoxy-1,4-benzoquinol (DMQH2). The sequence is that of Ubiquinone/menaquinone biosynthesis C-methyltransferase UbiE from Burkholderia mallei (strain NCTC 10247).